A 402-amino-acid chain; its full sequence is Type II NADH:quinone oxidoreductase (402 aa).

Residues 12 to 16 (GAGYA), 39 to 40 (NK), and Val83 contribute to the FAD site. Glu172 is a catalytic residue. FAD is bound by residues Asp302, 319-320 (AQ), and Lys379.

It belongs to the NADH dehydrogenase family. The cofactor is FAD.

The protein resides in the cell membrane. It carries out the reaction a quinone + NADH + H(+) = a quinol + NAD(+). In terms of biological role, alternative, nonproton pumping NADH:quinone oxidoreductase that delivers electrons to the respiratory chain by oxidation of NADH and reduction of quinones, and contributes to the regeneration of NAD(+). The protein is Type II NADH:quinone oxidoreductase of Staphylococcus saprophyticus subsp. saprophyticus (strain ATCC 15305 / DSM 20229 / NCIMB 8711 / NCTC 7292 / S-41).